A 415-amino-acid chain; its full sequence is Multidrug resistance protein MdtA (415 aa).

An N-terminal signal peptide occupies residues 1-21 (MKGSYKSRWVIVIVVVIAAIA). Polar residues predominate over residues 31–46 (DSQSAAPGATKQAQQS). Disordered stretches follow at residues 31-56 (DSQS…GMRA) and 392-415 (EAQS…GARS). Basic and acidic residues predominate over residues 399-415 (PEEKATSREYAKKGARS).

The protein belongs to the membrane fusion protein (MFP) (TC 8.A.1) family. In terms of assembly, part of a tripartite efflux system composed of MdtA, MdtB and MdtC.

It is found in the cell inner membrane. In terms of biological role, the MdtABC tripartite complex confers resistance against novobiocin and deoxycholate. The sequence is that of Multidrug resistance protein MdtA from Escherichia coli O6:K15:H31 (strain 536 / UPEC).